The following is a 30-amino-acid chain: Cycloviolacin-O20 (30 aa).

Positions 1-30 form a cross-link, cyclopeptide (Gly-Asp); sequence GIPCGESCVWIPCLTSAIGCSCKSKVCYRD. Disulfide bonds link Cys4/Cys20, Cys8/Cys22, and Cys13/Cys27.

In terms of processing, this is a cyclic peptide.

In terms of biological role, probably participates in a plant defense mechanism. The polypeptide is Cycloviolacin-O20 (Viola odorata (Sweet violet)).